The following is a 582-amino-acid chain: ATP-dependent lipid A-core flippase (582 aa).

The next 5 membrane-spanning stretches (helical) occupy residues 16–36 (LWPHISLYKAGLGVAVVALVI), 69–89 (FIILAMMFIRGLSGFVSGYCM), 153–173 (IIGLLGLMFWNSWQLSLVLVV), 250–270 (LANPIIQMIASFALVTVLYLA), and 275–295 (IKETLTPGTFTVVFSAMFGLL). Residues 29–310 (VAVVALVINA…LTSVTSDFQR (282 aa)) enclose the ABC transmembrane type-1 domain. Residues 342 to 578 (IKVDNVTFTY…DGAYAQLHRI (237 aa)) enclose the ABC transporter domain. Residue 376-383 (GRSGSGKS) participates in ATP binding.

This sequence belongs to the ABC transporter superfamily. Lipid exporter (TC 3.A.1.106) family. In terms of assembly, homodimer.

The protein resides in the cell inner membrane. The enzyme catalyses ATP + H2O + lipid A-core oligosaccharideSide 1 = ADP + phosphate + lipid A-core oligosaccharideSide 2.. In terms of biological role, involved in lipopolysaccharide (LPS) biosynthesis. Translocates lipid A-core from the inner to the outer leaflet of the inner membrane. Transmembrane domains (TMD) form a pore in the inner membrane and the ATP-binding domain (NBD) is responsible for energy generation. This chain is ATP-dependent lipid A-core flippase, found in Aliivibrio fischeri (strain ATCC 700601 / ES114) (Vibrio fischeri).